A 679-amino-acid chain; its full sequence is NADPH--cytochrome P450 reductase (679 aa).

Residues 1–21 are Lumenal-facing; sequence MASEQTIDGAAAIPSGGGDEP. Residues 22-42 form a helical membrane-spanning segment; the sequence is FLGLLDVALLAVLIGGAAFYF. At 43–679 the chain is on the cytoplasmic side; sequence LRSRKKEEEP…QKRYSADVWS (637 aa). Residues 84–228 enclose the Flavodoxin-like domain; that stretch reads LVVFYGSQTG…DFITWKDRFW (145 aa). FMN-binding positions include 90-95, 142-145, 177-186, and D212; these read SQTGTG, ATYG, and LGNKTYEHYN. Residues 283 to 523 enclose the FAD-binding FR-type domain; that stretch reads KNPFLAPIKV…FIRKSQFRLP (241 aa). Residue R302 coordinates NADP(+). Residues 458–461, 476–478, Y482, and 492–495 contribute to the FAD site; these read RYYS, TAV, and GVAT. NADP(+) contacts are provided by residues T537, 597-598, 603-607, and D640; these read SR and KVYVQ. W678 is an FAD binding site.

This sequence belongs to the NADPH--cytochrome P450 reductase family. The protein in the N-terminal section; belongs to the flavodoxin family. It in the C-terminal section; belongs to the flavoprotein pyridine nucleotide cytochrome reductase family. Interacts with sturkopf. FAD is required as a cofactor. The cofactor is FMN. As to expression, high in antennae.

The protein resides in the endoplasmic reticulum membrane. It catalyses the reaction 2 oxidized [cytochrome P450] + NADPH = 2 reduced [cytochrome P450] + NADP(+) + H(+). Functionally, this enzyme is required for electron transfer from NADP to cytochrome p450 in microsomes. It can also provide electron transfer to heme oxygenase and cytochrome b5. May function to clear the olfactory organ (antennae) from accumulating chemicals. The chain is NADPH--cytochrome P450 reductase (Cpr) from Drosophila melanogaster (Fruit fly).